Consider the following 507-residue polypeptide: ATP synthase subunit alpha, chloroplastic (507 aa).

170 to 177 (GDRQTGKT) is a binding site for ATP.

The protein belongs to the ATPase alpha/beta chains family. In terms of assembly, F-type ATPases have 2 components, CF(1) - the catalytic core - and CF(0) - the membrane proton channel. CF(1) has five subunits: alpha(3), beta(3), gamma(1), delta(1), epsilon(1). CF(0) has four main subunits: a, b, b' and c.

Its subcellular location is the plastid. It localises to the chloroplast thylakoid membrane. It catalyses the reaction ATP + H2O + 4 H(+)(in) = ADP + phosphate + 5 H(+)(out). Produces ATP from ADP in the presence of a proton gradient across the membrane. The alpha chain is a regulatory subunit. The sequence is that of ATP synthase subunit alpha, chloroplastic from Eucalyptus globulus subsp. globulus (Tasmanian blue gum).